We begin with the raw amino-acid sequence, 357 residues long: UDP-N-acetylglucosamine--N-acetylmuramyl-(pentapeptide) pyrophosphoryl-undecaprenol N-acetylglucosamine transferase (357 aa).

UDP-N-acetyl-alpha-D-glucosamine-binding positions include 14-16 (TAG), Arg168, Ser198, and Gln292.

Belongs to the glycosyltransferase 28 family. MurG subfamily.

The protein resides in the cell membrane. The enzyme catalyses di-trans,octa-cis-undecaprenyl diphospho-N-acetyl-alpha-D-muramoyl-L-alanyl-D-glutamyl-meso-2,6-diaminopimeloyl-D-alanyl-D-alanine + UDP-N-acetyl-alpha-D-glucosamine = di-trans,octa-cis-undecaprenyl diphospho-[N-acetyl-alpha-D-glucosaminyl-(1-&gt;4)]-N-acetyl-alpha-D-muramoyl-L-alanyl-D-glutamyl-meso-2,6-diaminopimeloyl-D-alanyl-D-alanine + UDP + H(+). It functions in the pathway cell wall biogenesis; peptidoglycan biosynthesis. Cell wall formation. Catalyzes the transfer of a GlcNAc subunit on undecaprenyl-pyrophosphoryl-MurNAc-pentapeptide (lipid intermediate I) to form undecaprenyl-pyrophosphoryl-MurNAc-(pentapeptide)GlcNAc (lipid intermediate II). The polypeptide is UDP-N-acetylglucosamine--N-acetylmuramyl-(pentapeptide) pyrophosphoryl-undecaprenol N-acetylglucosamine transferase (Oceanobacillus iheyensis (strain DSM 14371 / CIP 107618 / JCM 11309 / KCTC 3954 / HTE831)).